We begin with the raw amino-acid sequence, 416 residues long: Xyloglucan O-acetyltransferase 1 (416 aa).

Residues 1 to 14 are Cytoplasmic-facing; the sequence is MGLNEQQNVPSQRK. The chain crosses the membrane as a helical; Signal-anchor for type II membrane protein span at residues 15–35; it reads IIVFIVLAFIPIALFRLCFNN. Residues 36 to 416 are Lumenal-facing; sequence PFSSIKDTSL…MIEMLRRWKV (381 aa). Intrachain disulfides connect cysteine 79/cysteine 129, cysteine 100/cysteine 165, cysteine 109/cysteine 395, and cysteine 318/cysteine 391. An N-linked (GlcNAc...) asparagine glycan is attached at asparagine 96. The GDS motif signature appears at 152-154; sequence GDS. The active-site Nucleophile is the serine 154. N-linked (GlcNAc...) asparagine glycosylation is found at asparagine 194, asparagine 269, and asparagine 319. Catalysis depends on aspartate 390, which acts as the Proton donor. The DXXH motif motif lies at 390–393; it reads DCLH. Histidine 393 acts as the Proton acceptor in catalysis.

It belongs to the PC-esterase family. TBL subfamily.

The protein localises to the golgi apparatus membrane. Functionally, xyloglucan acetyltransferase that catalyzes the acetylation of fucosylated Gal residues on xyloglucan side chains. Predominantly catalyze 6-O-monoacetylation of Gal residues in the Fuc-Gal-Xyl trisaccharide side chains of xyloglucan oligomers. Involved in xyloglucan specific O-acetylation in roots and rosette leaves. The polypeptide is Xyloglucan O-acetyltransferase 1 (Arabidopsis thaliana (Mouse-ear cress)).